A 638-amino-acid chain; its full sequence is ATP-dependent zinc metalloprotease FtsH (638 aa).

Topologically, residues 1 to 4 (MNNQ) are cytoplasmic. A helical transmembrane segment spans residues 5-25 (GKNIIVWAVIFVFVILLFNVF). Topologically, residues 26 to 103 (QSDGLLSSKN…VVPPETRMNT (78 aa)) are periplasmic. A helical transmembrane segment spans residues 104 to 124 (FLSFLISWFPMLLLIGVWVFF). Over 125-638 (MRQMHGGGKA…PIKAKKEDKS (514 aa)) the chain is Cytoplasmic. 195-202 (GPPGTGKT) is an ATP binding site. H417 serves as a coordination point for Zn(2+). E418 is an active-site residue. Zn(2+) contacts are provided by H421 and D495. Positions 523-544 (SASEDMYTNRNSSSDRSESTSE) are disordered.

In the central section; belongs to the AAA ATPase family. The protein in the C-terminal section; belongs to the peptidase M41 family. As to quaternary structure, homohexamer. The cofactor is Zn(2+).

Its subcellular location is the cell inner membrane. In terms of biological role, acts as a processive, ATP-dependent zinc metallopeptidase for both cytoplasmic and membrane proteins. Plays a role in the quality control of integral membrane proteins. The sequence is that of ATP-dependent zinc metalloprotease FtsH from Rickettsia bellii (strain RML369-C).